Consider the following 309-residue polypeptide: MAPAPPPPPPAPAPAAAAPAPPLMTGDRSALLNSIQKGKKLKKATTNDRSAPVVGGGVVGERKSNTPKSFAAPPVPTGAPSLPTSSNNTQQAEERPSMPALGGLFAGGMPKLRHIGKSSASAAPPSAPAPPTPQSELRPPTSAPPRPSIPPPSPASAPPIPSKAPPIPSSLPPPAQPAAPVKSPPSAPSLPSAVPPMPPKVPPPPLSQAPVANTSSRPSSFAPPAGHAPNVTSESPKFPNRGPSIPSASVPPVPPSSYVLQQRPNRVDDHGRFHFKDDSYLPIPHPFLGVPKVYRGGSGTTVPLNLSSF.

Pro residues predominate over residues 1-13; the sequence is MAPAPPPPPPAPA. Residues 1-273 are disordered; the sequence is MAPAPPPPPP…PNRVDDHGRF (273 aa). The WH2 domain maps to 27–44; sequence DRSALLNSIQKGKKLKKA. Over residues 82–91 the composition is skewed to polar residues; that stretch reads LPTSSNNTQQ. Residues 141-207 are compositionally biased toward pro residues; sequence TSAPPRPSIP…PPKVPPPPLS (67 aa).

Belongs to the verprolin family. Interacts with wsp1. Interacts with myo1 (via SH3 domain). Interacts with actin monomers.

Its subcellular location is the cytoplasm. The protein resides in the cytoskeleton. Functionally, involved in cytoskeletal organization and cellular growth. May exert its effects on the cytoskeleton directly, or indirectly via proline-binding proteins such as profilin or proteins possessing SH3 domains. Plays a role in actin patch assembly by enhancing the ability of myo1 to stimulate actin polymerization by the Arp2/3 complex. This Schizosaccharomyces pombe (strain 972 / ATCC 24843) (Fission yeast) protein is Verprolin.